The primary structure comprises 658 residues: Glycogen debranching enzyme (658 aa).

D336 serves as the catalytic Nucleophile. The active-site Proton donor is the E371. The disordered stretch occupies residues 459-484 (EANGEENRDGTNSNYSDNHGKEGLGG).

Belongs to the glycosyl hydrolase 13 family.

It carries out the reaction Hydrolysis of (1-&gt;6)-alpha-D-glucosidic linkages to branches with degrees of polymerization of three or four glucose residues in limit dextrin.. It participates in glycan degradation; glycogen degradation. Its function is as follows. Removes maltotriose and maltotetraose chains that are attached by 1,6-alpha-linkage to the limit dextrin main chain, generating a debranched limit dextrin. This is Glycogen debranching enzyme from Salmonella choleraesuis (strain SC-B67).